A 475-amino-acid chain; its full sequence is MERSTTSDTASEKPNPSHSTGAVQMRIKNANSHHDRLSQSKSMILSDNVKVLEPINRHRRNHSQHNLTLADIISTPDHTVVEKEGYLLKAKIADGGKKLRKNWSTSWIVLTSRKMEFYKESKQPALANLKPGYKPECVDLCGAHIEWTPEKSSRKNVFQITTVSGNEFLLQSDIDFLILDWFHAIKNAIDRLPKERSCTSRNLEFKLRRSSSTELLNSLDTESKESKPEHRKSLIFRLNYSASDSNDRSRVKSRLKKFISRRPSLKTLQEKGLIKDQIFGSHLHLVCEHENSTVPQFVRQCIKAVERRGLEVDGIYRVSGNLATIQKLRFVVNQEEKLNLDDSQWEDIHVVTGALKMFFRELPEPLFPYCFFEQFVEAIKIQDNATRIKAVKTLVKKLPRPNYDTMKVLFEHLKKIAAKESVNLMSTQSLGIVFGPTLLRPEKETGNMAVHMLYQNQIVELMLSEYSKIFGSEED.

The tract at residues 1–22 (MERSTTSDTASEKPNPSHSTGA) is disordered. The 111-residue stretch at 80 to 190 (VVEKEGYLLK…WFHAIKNAID (111 aa)) folds into the PH domain. The Rho-GAP domain maps to 281–470 (SHLHLVCEHE…LMLSEYSKIF (190 aa)).

The protein resides in the cytoplasm. The protein localises to the membrane. Its function is as follows. GTPase activator for the Rho-type GTPases by converting them to an inactive GDP-bound state. In Gallus gallus (Chicken), this protein is Rho GTPase-activating protein 15 (ARHGAP15).